Here is a 372-residue protein sequence, read N- to C-terminus: 4-hydroxy-3-methylbut-2-en-1-yl diphosphate synthase (flavodoxin) (372 aa).

Residues C270, C273, C305, and E312 each coordinate [4Fe-4S] cluster.

Belongs to the IspG family. [4Fe-4S] cluster serves as cofactor.

The enzyme catalyses (2E)-4-hydroxy-3-methylbut-2-enyl diphosphate + oxidized [flavodoxin] + H2O + 2 H(+) = 2-C-methyl-D-erythritol 2,4-cyclic diphosphate + reduced [flavodoxin]. Its pathway is isoprenoid biosynthesis; isopentenyl diphosphate biosynthesis via DXP pathway; isopentenyl diphosphate from 1-deoxy-D-xylulose 5-phosphate: step 5/6. Its function is as follows. Converts 2C-methyl-D-erythritol 2,4-cyclodiphosphate (ME-2,4cPP) into 1-hydroxy-2-methyl-2-(E)-butenyl 4-diphosphate. The sequence is that of 4-hydroxy-3-methylbut-2-en-1-yl diphosphate synthase (flavodoxin) from Escherichia coli O9:H4 (strain HS).